We begin with the raw amino-acid sequence, 7763 residues long: MGSIGNVQSPLPRCVQSMHAPSVMQEEMIVSTIADPSHKSYFETYHFSAQGIVDPDQLNGAIHAVARKHAVLRSVFVHPTEFDSTNVQIAVLDQAYTLHRAKLLSLQPIGEEIRFGILPLESIGTDEWDGVMPWKFSLVVCEREQKSYITVRYHHALLDGWSARALLELVQQEMLNPGAVLKGSDFFSLVRQPLKRDWKQDETLLRERLAQIETSPILSPGPVANGDLRVGEVTREVSISSDIWLPDRPAVPARLLRLALGMTISVFRNSDDSLFLEITSARSRLFPKDQQVLGPVLAPQVRNIHLKEHTTLGECMQLLRSSNDPQHNFSVSQLKSFLTESSRDLDVCLVCQTNESYPSNGVGHWEWIKGEARNDLPFILEILPPKEGVFFAKIRYHQNRFEKQFADSFLEFFCQTLTWMQATGNSIDHQTFAAAVSEICRQGDYRQHYLALNPRGVSDDPVNVHDLIEQAASKWPSKIALEAEHNQFMTYAELSNESDRVAKGLRHCLPRDQKDQPLVPICFDKSVDMVVAIVAVLKAGGAYVPLDPSQPRDRLVSILSACHATVVIAGQTDLQDVLHSTCSELSILVTSIENLSEHDKSTDELSGSEHPPPSSLAYVLFTSGSTGTPKGVMVEHRNLVAFMKAGEGNADGTWTSTRLQLAAYSFDASIGDIFANLYRGGRLALVQRNKMLSNLNHWLEEMLITHLALTPTIGDLIISHLPPRLQTLMFGGEPFHQSFLAQAPAEARVWNTCGPTETVVDVACCILQKENPDVPIGRPFGQCQIYILRRGGSNTAVPPNAIGEICVAGPQVSRGYLERPDLTSLGFVTDPFRPSQRMYRTGDLGRLNHRGMLEHLGRADGQIKLRGLRVETGEVEVTIKQSSSIIAQVTVSVNHLEGYDREALVAWIVPEASQGSQDIELAWQEDIMPSCQRRLVPYMIPEVWIMISYLPLTVSGKLNRGTLASWVEHVATGGTHDGLYVITAPWKTQEITQRLPESPAERLLVATCANILGTTLHAVSMDSTFIALGGNSLLAMRLLAALRQEGMNCSLRDLLTPMTLGDVARAMSPSSTPKKQITKAFYHEDSWERIVADSSIAADTIDAIYPCTPQQEGLIQTSLHGDKSAYFATITVHLGDSLNLRTFHAAWNRLVFGCDMLRTAFVSFSEVQHPPVSESNILQVVLSQSAEDVRRLVSLDNRDIAFQFGVVPLSAGISQGSVNEPWRLHLKIHHALYDEAFLSRIVAELCIVYEALEMESSEAALPPSRPFSAFVESLCNDDPEVSKGFWKKYMHEVAPATWPVASGIRRMREENGQDVEMTVVKSWTGNAVALGQKFQATPASIVRAALALALAQYSQTDDVVFGEVSSGRFDHDRFTLGPCLATHPVRIQIDRKSSSGMLKLVTQALESYLATTPYQHCGLASIHRQTADPDLMAFQVLFAHQEAFVEYTAGSRFHVKSAKLRNIGFPLVLESRCDRSTGNLAFECSFDRRYLGDQDVDWFLRSICRTLDMFSAGARDGLSDQKLITGVVDEEMRRAIEKWSTKRTPFGSTFTRNAEICAHELFEMQADMTPQKIALQVNQSEFITYKELNKRCNQLSNALVNWLDSLGLEQSRDQQIVPLCFSNAVDMVIAMIAVLKAGAAYLPIDQNHPQERIQQILSLSGARAMLGDGEAETLEKLQAASKQANSTLITSKRLRTLYGGQTAKKPSFRPTPASLAYVIFTSGSTGKPKGVMVEHGNLAAFMQANEPEAVGTWTSVRLQLATATFDAATGETFGTLGCGGRLILGQTHEILAGLPDWLERTNITHLFVTPRVAANFLTEIHPPYLRTLHIGGEAFDPSILPHMPPGCDVYNVFGPTETTIYATHYKIRKGDGIRRNIPIGYPFGGCRLYILNPETLEQVPIGVIGEICIGGPQVTRGYQGRPELTSRSFLSDPHIVGERMYRSGDLGRLCGDGSIEHHGRIDSQIKLRGLRIEISEIESVCLEHAIATACTVIVLDREDGQVLVAFVQTQKDQQTSTCSQDWAETESILHRHLDSRLPSYMVPSRFVPIEVMPLTTSGKVDRRQLGARAETMDQAGELFTSQHTNHAGSWEQGSIEDKIADAWVQVLGIDRANITPNVAFSRLGGDSIRAIRLLSLLRKAGLKLNMTDVSNASTIFSQAKCATSHTVAAKKSTEDATDIDAHTGPVALGPIAGRYAGIQLKYASQRGEQIIDHFNQSVLLDVTTLCPLRLQQALQRLRNHHDPLRAIVHWSLDIPVEEWTIRILPCSDIKPLVLDSPRTLTLQALREQIQHRITGLDIRRGKVMDAELYRLDGDSRVFLFWTVHHFVVDIVSWQILRDDLNVLVRAKEEPESIALQPATMSFLAWTREGQMKSQDASLATGSIPEEPDILLSSSDSDQLPLWVRQPELVPIHPVNRTTTSASLSPCITALLLGRSNNVLSTEPLDLLLAGLAMTISKHFARAVDRLVVGLETHGRHTGTNTADLSRSIGWFTAIIPMILDCRCESSSIESVVRRVKDQRRLLMENDRGFRHFVASRWSTANARKSEIMPLVFNYQGVRHDPHDHDEMMLHPVQIPGLSWIESSPHAIPLSHAAFELYVHDRQAYIEATWPSDGEMDQEDVATLMGEQITNICQYLAEKDVLGKTSISASSTSAFGLLPDDCFDRVFSLYPEDTLDDIIPCTPMQRALLYEGIADHESRSYVTCRIWRIPTDQAICSQIEGAVKSLIQRHGILRTVFHIDPEVGPLALVLRDTQSPTASAVGHVKVKDHTEMEERVTSLLCNPDYGNPMKQAFYVRIVHAADGSGARLIWLLHHSLIDAWSQDLLLSELTQILVDGCPTKSLIPRPSFGSFARYVTSDSRADHSHGKFWSETLNGVQPKSLPLSLMSSSPINAAAVVVEQACNLAILSENCISPAALVSLAWSLVLSEILDTDDVTHGMLFSGRQLPVDGVADIIGPCISTVPIRTHLNRHGKVLDLLQSTEAAIRLAGSHSTVGVDGVARAAGVEAPALVNTLLNFFGVRTDVLENDGLNSILELDSVDDGLPPSITLSCWQREVDANIMVMRLERRHPLQIGIAQCLVKRMAWYCHTLSHHMDRKLDSVLSITSNEDQLLTKWSQPVDSRPSDSYPCIHDLITGWAAQVPEKVAVQVAESQFVTYGEIEKKSTAIARVIERLVDPRSGSTPPLIPICCDRGVDMVIAILAILKAGAAYVPLNISDPEGRLEAILRQTGSTILVDGLLDKGSRRKLHALGDRTSTTVYTVDGLSILPPSEVSLRKAHSESLAYVLFTSGSTGEPKGVMIEHRNLTSFITTQHNEIIGRWTSCRMPVAAYTFDVSMADLLISLAIGARVALVDSEKMLASMPYWADRTLATTLSMTPTLASLLARSLPPHVAVLMLAGEVFDPNIMKALPRECRVWNGYGPTETFYASFHPVDAQPTHAQVPIGRSFGGNRIYILRPGSNYRQPIGAIGEICIGGTQVARGYLGREDLTSRSFTRDPYNTQTVLYRTGDLGRFTDCGVVEYLGRMDDQIKIRGQRAEPAEIESVVHAASPRVAHAIVDLYQSKRGGGLPRLIAFISTKDPVPPSLCKTFLQEEVEPSCRNQLPGHMMPSTWIYVRTVPLTSSGKADKRMLRSWMARLEEGETVPEASIIELSLSTQMNSETHQDISGGPESPTEIMLRQSCAQLFKVNEDIISLDKSFISSGGDSLLALQLNARLREKGLKCTPRDIVEAQSLAELATILNTSYEAVSPVHMADWTLDLNEMARLPDNGIQGWETIVQRVGIDPGQVRCVMPCTPFQEGVLSSNDESGSSAGYLAHMTVGLGKEIDVEALKYAWQETVDHEDMLRTTFIPADMDMTDIRGLGQGSSLLQVVLYPESPQAGRVKTMKTVSTPATPNAALPSYPSLQGKAQQGHIPVAALVAIGSQDGEGQECTLLITMHHALYDEAYLSLLLKDLSGRYRSIACNEVVPQVPEDQRIPFSTYVRFVHSKLGTAPSTSTAGKFWKSYLADATPSTWPLPHGMQSSITSVKSPETAVLEWTGNLRAAASKVQVTAAAIARAALALTVAEHTNVTDVVLGEVSKGRPDIRGPGDARARFITGPCATTHPVRIRIADEGASKRRTMLQLLRESFTSYMETLPHQFYGLSRIREQSCRVDLLPFQVLFVYQDAFRQKEGLAGDDAFQIQGGNLGQMGFPIVLECSCLSGDSGVVFHCTYAPDVIDKPRIEWFLHHISQSIDALVQVDPARSDSLRSARVPLSAQETRQLELWSRCHAAKDVEKVDDTMPTETSSITHAFDDTARNLHEKRSTSLSMALQRHIVSLDDVGSQQPIIPICFERSTDMVVAILAILKAGAAFVPLEPGYPPERLISIVRTARASLMICGKEDKSNEILVSVCHATNTKLITLEDLKSRPASSDQAVISRYCRDDSRIAYVLFTSGSTGTPKGVVITHRNLLAFMRHNNPDVHGRWYNSRMPVASYTFDVSMADIITTLCCGGRVVLVPVQKLLPSLGAWVDASITSHISLTPTIANMLWEPVKNAEIAFPFLSVLLLAGEVFDAQLMSYVPKECRVWNGYGPTETFYVTFYRVPKAHAKEQTSVSIGYPFGENVIHLLGFESNDHVPVGCIGEICVMGPQVAQGYLGQPELTKQRFKRGVISQAPEGFLYRTGDIGRFHPDGKLEYLGRFDRQIKIRGQRVELAEIEMAIAQHSFVDGCAVVVVNTPTGDSLVGFCVKTSSQTPGKGWDANTAVQIKTWISTRLPAHMVPSYLFPLEGELPRVPSGKVDRQLLAQRATDLLADSLLSSQGQDTYIAPTTEREKVICEIFEETLAQRVSVLDNFLHLGGHSILAIRAVSKINHRLHANLTFKDVFDFATARDLARQLESTATNHRSYTSIPRLTQDKMIVRQSFAQGRLWFLDQLHPGSTWYLMPFGLRIQGDLHLDALEAAVSAIEERHETLRTTFEHRDGENVQVVHPFAHRQLRVVEVPPAVDEEGLLGALKEEQSTPFDLQVHPGWRPLVLRQNKRSHILSIVIHHIICDGWSVAVLLKELSTFYSAALHGKPIHAQLPPLPIQYRDFSAWESQKEQRVEHDRQLKYWIEKLTGSKPAEFICDKRRPQAPSRQAIFEEVRIDGAMYDQLRQYCKQHQLTPFIVLLAVFRATHYRLTREADATIGTPIANRGREELHDIIGLFVNVQCIRLKVDDHHTTFEDLVNQAQSTATEAFAHQDIPFDRIVSALQPDRETTQNPLVQTVFAVHPQTQGKEELEGLLTEQILLSRTTRFDLEFHLFQEEDGLSGQVVFAQDIFFPETVKAMISVFYAVLECGLNQPSISVASMALLNDLSMHDMDDLLSINQTDYPRDATVVDLFRQEARSHPDSIAIVHEGKEVTYGELDRQSDNIERWLRSLHLDRETIVGVLAARSAEAITVFLGIMKADLAYLPLDASTPQTRICSVLSCISERITVIVVDGAQVAVPDVSLAHVDFVALSNLLDDQRHKPSDNQKFESESSISATSLACVLFTSGSTGRPKGVMIEHRAIVRLAKDFNFAKAAGKPLAHMASLSFDVSTWEVFMPLLSGGVVVCVDAMTVLDYKALSDVYARHHVRAAMFTPALFKQCLHDSPSIVKNLDLLILGGDRLDPEDVFQAKQLTQGIILNGYGPTENTGASTIYPIPDEESCVNGVPIGKPIGNSGAYVMDDSLNVVPKGVVGELVVTGDGLARGYTDPEKNEGRFVHVVIGQDTVRAYRTGDYARWRPIDGQLEYFGRRDDQVKIRGNRVEIGEIEHNILSHSAVRSAAVVMNGVGAEADLAAFVTLHPIHDDVAETERVDAWKNVFDTEAYDSFTHQPNRLGRDFVGWLSMYDGCNIDLTEMDEWLDDTLQTLLNGQDPGKVLEIGTGSGMILFNITKGLEEYVGIELVPKLAHMVEQVANADQRLAGRVKVHPGVADRVEDFIPGFIPDLVIINSVAQYFPSAGYLSEIVQKLVRLQGVKSLFFGDIRSYPLYDEFLVSKALHNAGARATQDQIRKCIEESKAAETELLVDPAFFTSLTNQFPDQVAHVEILPKLMNATNELSCYRFSAVVHLKHATAATRIACQVKKADWIDYTARSLNSRSLLEHLRSSHDNTIIAVENIPNRRTILERYIVDALKEGVEPRSMDTKSHWQVRHRNRAAQSSALLPGDLVAIANQAGFQVEISWARQSSQRGAFDAIFHRMGPNSRRQRVLFDFPVDHQCRDVDSFTNHPVQGQQDQQCIFELKESLRAQLPAYMIPRTITILDQLPLTDRGKVDRQALRQRIIKQEPVATESESSAGRVTVEYGSEMERILCDVFAEVLGLQSVDRESSFFSLGGHSLLAPRLASRVSKRLDCTATVRDLFDCPTPVRLADRLLSKQSDSNTEANTSTDGKTQHSALDKVKYHNTLRDWGVQSSEVGHLMPCTPFQEGVLSNSLAVPGDSGYLSVVRLGLQSQLDTKAMRLAWQKVVEREETLRTAFIPVAEDLSSACITSSTFWQCIFNINSREVQRLLCIEGRNSGVDRSALGFGHIPVSLILTDVPTVCKARGVGSTQLELTIHHALYDEAYFRWIIHELSREYHKARLAKDYVPLRAPQTSMNRIPFSIFVSQLQAMPKESATSFWKSYLNGAPAACWPVARGLESGRITEIDEFSSRSLIWKGNMHNLAGARGVTPAAISRAAVALVVAEHSGVEDIVLGEVSSGRSITDGAAGFVAGPCISTHPIRIRMQQRQGSRSSQHRLSFDQLVKQSLNSYLETVPYHQLGLPSIRRQSDAPDLLPFQVLFVYQQAFDFETDSREEASHNFKVQGGHLGRFEFPVVLQASCHPVTGHMSLQCMFDPTVLITEDIEWFLEHISQVLSSIADSSSQPVARLTVGDAEEAALTKLSCAKDQTPELPLGTDSESLCAHDLISRQAMESPCKIAVQYELSQFMTYGELDRESTKLSIVIRAFFDHLSKSVSHEQPLVPISFDKGLDMIVTMLAVLKAGAAYIPLDISHSEQRLRMICQSAQAKLILWDGQNGFDKLRAIGHSSGATISTVDELSDAVDGWGSTPRSGEKPNLSSLAYIIYTSGSTGVPKGVMVNHANLVSFMRSATNETYMSWTANRLQIASYAFDMSVSDIFPVLAVGGRVLLARQQSLWSDLAGWVDAFAVNQLMTTPTVADMMLSSALSDGFLLAHLRDVIVGGEAVKRDILDKAPTEMVFWIQYGPTETTVVVTGCMFRGPTYYQPVPHSQITTIGFPLRGCRVYILQPGTSNRVPIGVPGELCISGPQVTMGYRGGGDPSESPFVPDPFWAGQTMYRSRDIAKVHGDGMIEWVGRMDSQVKLRGLRIDLGEIESAARQLNGVQSCAVVKLALEDKETLLAFIEVAKSHQTHITPVTIQQHIAQNVPSYMVPAHLRLLDKPLPRTASDKLDRKGIHALAQQLVDNGDLLSSCTSRIPPADLRPSPGTLEATLASYWGTILGIDQEVISLETPFSHLGGDSVRAISLLALLRRNNFQLNLTDLGSFSTIRSQAFRILCDVQPQKLPAYMQLTTRSTSRATMVLIHPFFGQSSVFDHVVPALSEQYDIVQVSDPFFGKPDGPASLRDWAAHYLEALHVHLEQDRPVVLVGYSFGGLLVLEMARLLEMTGKGSPFSTVIVDTRCYDPDQPFFKDEEERQTAADDAVRLFGPGQTSMIEEHFDKHAHIWENSVCPDKYLGRSLYLATPEAVESGIVDWWRNQCPHIEVQRVECSHGEIFEPAMTGRVSALINGHCDLDFTRIEP.

Positions 20-168 (APSVMQEEMI…DGWSARALLE (149 aa)) are condensation 1. Residues 469–866 (EQAASKWPSK…GRADGQIKLR (398 aa)) are adenylation 1. Residues 995–1071 (LPESPAERLL…DVARAMSPSS (77 aa)) form the Carrier 1 domain. Ser-1032 carries the post-translational modification O-(pantetheine 4'-phosphoryl)serine. The segment at 1104 to 1526 (IYPCTPQQEG…GLSDQKLITG (423 aa)) is condensation 2. The interval 1562-1968 (FEMQADMTPQ…GRIDSQIKLR (407 aa)) is adenylation 2. The Carrier 2 domain occupies 2090–2166 (WEQGSIEDKI…SQAKCATSHT (77 aa)). Ser-2127 is subject to O-(pantetheine 4'-phosphoryl)serine. Residues 2212-2556 (DHFNQSVLLD…IMPLVFNYQG (345 aa)) are epimerase (E). Residues 2676–3016 (DIIPCTPMQR…PALVNTLLNF (341 aa)) are condensation 3. The adenylation 3 stretch occupies residues 3136-3531 (WAAQVPEKVA…GRMDDQIKIR (396 aa)). The Carrier 3 domain maps to 3667–3743 (GPESPTEIML…ELATILNTSY (77 aa)). Ser-3704 bears the O-(pantetheine 4'-phosphoryl)serine mark. The segment at 3789–4238 (VMPCTPFQEG…ISQSIDALVQ (450 aa)) is condensation 4. Residues 4321–4687 (VGSQQPIIPI…GRFDRQIKIR (367 aa)) are adenylation 4. The Carrier 4 domain maps to 4806–4880 (APTTEREKVI…DLARQLESTA (75 aa)). At Ser-4840 the chain carries O-(pantetheine 4'-phosphoryl)serine. The tract at residues 4902–5339 (SFAQGRLWFL…ALLNDLSMHD (438 aa)) is condensation 5. The segment at 5361–5765 (FRQEARSHPD…GRRDDQVKIR (405 aa)) is adenylation 5. Residues 5820 to 5975 (DAWKNVFDTE…YLSEIVQKLV (156 aa)) form an S-adenosyl-L-methionine-dependent N-methyltransferase region. The Carrier 5 domain maps to 6306-6381 (EYGSEMERIL…RLADRLLSKQ (76 aa)). Position 6341 is an O-(pantetheine 4'-phosphoryl)serine (Ser-6341). The disordered stretch occupies residues 6378 to 6399 (LSKQSDSNTEANTSTDGKTQHS). Positions 6379-6399 (SKQSDSNTEANTSTDGKTQHS) are enriched in polar residues. Residues 6424–6883 (MPCTPFQEGV…TVGDAEEAAL (460 aa)) form a condensation 6 region. Residues 6913–7327 (RQAMESPCKI…GRMDSQVKLR (415 aa)) form an adenylation 6 region. The region spanning 7446-7522 (PSPGTLEATL…SQAFRILCDV (77 aa)) is the Carrier 6 domain. O-(pantetheine 4'-phosphoryl)serine is present on Ser-7483. Residues 7542–7638 (TMVLIHPFFG…TGKGSPFSTV (97 aa)) form a thioesterase (TE) region.

It belongs to the NRP synthetase family.

Functionally, nonribosomal peptide synthetase; part of the gene cluster that mediates the biosynthesis of the aspergillicins A and F, 2 cryptic cyclic hexa-depsipeptides. The hexamodular NRPS agiA catalyzes the condensation of the six amino acid residues including N-Me-L-O-Me-tyrosine, L-proline 1, L-proline 2, D-isoleucine, O-acetyl-threonine, and L-isoleucine. The starting condensation domain (C1) of agiA probably loads acetyl-CoA which is condensed on the N-terminus of threonine by the first module to yield O-acetyl-threonine. The second module then loads L-isoleucine. The epimerase (E) domain on module 2 is probably involved in the formation of the D-isoleucine moiety. Modules 3 and 4 further load 2 successive L-prolines. Module 5 is then involved in the condensation of O-Me-L-tyrosine produced by the O-methyltransferase agiB and the N-methyl transferase (NMeT) domain on module 5 probably catalyzes the N-methylation to yield the N-Me-L-O-Me-tyrosine moiety. The A domain of module 5 loads preferentially O-Me-L-tyrosine, but it can also accept L-phenylalanine, which leads to the production of aspergillicin G. Module 6 then loads the last residue, L-isoleucine. The C-terminal thiolesterase (TE) domain probably cyclizes the peptide using the hydroxy group from threonine to form the cyclic depsipeptide. This Aspergillus flavus (strain ATCC 200026 / FGSC A1120 / IAM 13836 / NRRL 3357 / JCM 12722 / SRRC 167) protein is Nonribosomal peptide synthetase agiA.